Here is a 157-residue protein sequence, read N- to C-terminus: Large ribosomal subunit protein uL15 (157 aa).

Residues 1–40 form a disordered region; that stretch reads MKLHELSDNPGATKKRMRIGRGPGSGKGKMGGRGIKGQKS. Residues 21 to 35 show a composition bias toward gly residues; it reads RGPGSGKGKMGGRGI.

Belongs to the universal ribosomal protein uL15 family. Part of the 50S ribosomal subunit.

Binds to the 23S rRNA. This is Large ribosomal subunit protein uL15 from Ruegeria pomeroyi (strain ATCC 700808 / DSM 15171 / DSS-3) (Silicibacter pomeroyi).